A 513-amino-acid chain; its full sequence is ATP synthase subunit alpha (513 aa).

Residue 169–176 participates in ATP binding; it reads GDRQTGKT.

This sequence belongs to the ATPase alpha/beta chains family. F-type ATPases have 2 components, CF(1) - the catalytic core - and CF(0) - the membrane proton channel. CF(1) has five subunits: alpha(3), beta(3), gamma(1), delta(1), epsilon(1). CF(0) has three main subunits: a(1), b(2) and c(9-12). The alpha and beta chains form an alternating ring which encloses part of the gamma chain. CF(1) is attached to CF(0) by a central stalk formed by the gamma and epsilon chains, while a peripheral stalk is formed by the delta and b chains.

It is found in the cell membrane. It catalyses the reaction ATP + H2O + 4 H(+)(in) = ADP + phosphate + 5 H(+)(out). In terms of biological role, produces ATP from ADP in the presence of a proton gradient across the membrane. The alpha chain is a regulatory subunit. The protein is ATP synthase subunit alpha of Polynucleobacter asymbioticus (strain DSM 18221 / CIP 109841 / QLW-P1DMWA-1) (Polynucleobacter necessarius subsp. asymbioticus).